A 246-amino-acid polypeptide reads, in one-letter code: MHASTGKGSKIKYSRVLFKISGEALMGSRPFGHDMELIDQLCKDISDIYKLGVQVCIVVGGGNIFRGASASLSGCERASSDYIGMLATIINALILQNFLEKNSVNSKVLSAIPMVTICEPYIRRKAIHHLEKGRVVIFAAGTGNPFFTTDTAAALRAVETNCDAILKGTQVNGVYSADPKKNEDAVMYDRLSYMDLLTRDLKVVDASAISLARENSIPIIVFSLKEEKIVNIVKGHGTYTIVSDCE.

19–22 is a binding site for ATP; the sequence is KISG. Residue Gly-61 coordinates UMP. Gly-62 and Arg-66 together coordinate ATP. UMP is bound by residues Asp-81 and 142 to 149; that span reads TGNPFFTT. The ATP site is built by Thr-169, Gln-170, Tyr-175, and Asp-178.

Belongs to the UMP kinase family. As to quaternary structure, homohexamer.

It localises to the cytoplasm. The catalysed reaction is UMP + ATP = UDP + ADP. Its pathway is pyrimidine metabolism; CTP biosynthesis via de novo pathway; UDP from UMP (UMPK route): step 1/1. Inhibited by UTP. Its function is as follows. Catalyzes the reversible phosphorylation of UMP to UDP. The protein is Uridylate kinase of Wolbachia sp. subsp. Brugia malayi (strain TRS).